Reading from the N-terminus, the 375-residue chain is Chaperone protein DnaJ (375 aa).

A J domain is found at 5-70; it reads DYYDVLGVNR…QKRGAYDQFG (66 aa). A CR-type zinc finger spans residues 135 to 213; the sequence is GCEKQIRIPS…CHGAGQKKTT (79 aa). Zn(2+) contacts are provided by C148, C151, C165, C168, C187, C190, C201, and C204. 4 CXXCXGXG motif repeats span residues 148–155, 165–172, 187–194, and 201–208; these read CSTCNGTG, CATCGGHG, CPTCHGTG, and CGSCHGAG.

The protein belongs to the DnaJ family. As to quaternary structure, homodimer. It depends on Zn(2+) as a cofactor.

It is found in the cytoplasm. In terms of biological role, participates actively in the response to hyperosmotic and heat shock by preventing the aggregation of stress-denatured proteins and by disaggregating proteins, also in an autonomous, DnaK-independent fashion. Unfolded proteins bind initially to DnaJ; upon interaction with the DnaJ-bound protein, DnaK hydrolyzes its bound ATP, resulting in the formation of a stable complex. GrpE releases ADP from DnaK; ATP binding to DnaK triggers the release of the substrate protein, thus completing the reaction cycle. Several rounds of ATP-dependent interactions between DnaJ, DnaK and GrpE are required for fully efficient folding. Also involved, together with DnaK and GrpE, in the DNA replication of plasmids through activation of initiation proteins. This is Chaperone protein DnaJ from Chromobacterium violaceum (strain ATCC 12472 / DSM 30191 / JCM 1249 / CCUG 213 / NBRC 12614 / NCIMB 9131 / NCTC 9757 / MK).